A 195-amino-acid chain; its full sequence is Peroxiredoxin (195 aa).

Residues 4–162 enclose the Thioredoxin domain; sequence AMIGKPAPEF…TLRLVQAFQF (159 aa). Cysteine 49 functions as the Cysteine sulfenic acid (-SOH) intermediate in the catalytic mechanism.

Belongs to the peroxiredoxin family. AhpC/Prx1 subfamily. As to quaternary structure, homodimer; disulfide-linked, upon oxidation.

It catalyses the reaction a hydroperoxide + [thioredoxin]-dithiol = an alcohol + [thioredoxin]-disulfide + H2O. Its function is as follows. Thiol-specific peroxidase that catalyzes the reduction of hydrogen peroxide and organic hydroperoxides to water and alcohols, respectively. Plays a role in cell protection against oxidative stress by detoxifying peroxides and as sensor of hydrogen peroxide-mediated signaling events. The polypeptide is Peroxiredoxin (Ascaris suum (Pig roundworm)).